Reading from the N-terminus, the 617-residue chain is MAFPHRLDAPELPDFSMLKRLARDQLIYLLEQLPGKKDLFIEADLMSPLDRIANVSILKQHEVDKLYKVENKPALSANEQLCFLVRPRIKNMRYIASLVNADKLAGRIRKYKVILSPQKFYACEMVLEEEGVYGDVSCDEWAFSLLPLDVDLLSMELPEFFRDYFLEGDQRWINTVAQALHLLSTLYGPFPNCYGIGRCAKMSYDLWRKLEEEEDSETKGRKPEIGHIFLLDRDVDFVTALCSQVVYEGLVDDTFRIKCGSVDFGPEVTSSDKSLKVLLNAEDKVFSEIRNEHFSNVFGFLSQKARNLQAQYDRRRGMDIKQMKNFVSQELKGLKQEHRLLSLHIGACESIMKKKTKQDFQELIKTEHALLEGFNIRESTSYIEEHIDRQVSPIESLRLMCLLSITENGLIPKDYRSLKTQYLQSYGPEHLLTFSNLRRAGLLTEQAPGDTLTAVESKVSKLVTDKAAGKITDAFSSLAKRSNFRAISKKLNLIPRVDGEYDLKVPRDMAYVFSGAYVPLSCRIIEQVLDRRSWQGLDEVVRLLNCSEFAFTDTAKEDKASSESLRLILVVFLGGCTFSEISALRFLGREKGYRFIFLTTAVTNSARLMEAMSEVKS.

The residue at position 2 (A2) is an N-acetylalanine.

Belongs to the STXBP/unc-18/SEC1 family. Interacts with RAB11A and VIPAS39. Associates with adapter protein complex 3 (AP-3), clathrin:AP-3 and clathrin:HGS complexes. Phosphorylated on tyrosine residues.

The protein resides in the late endosome membrane. The protein localises to the lysosome membrane. It localises to the early endosome. It is found in the cytoplasmic vesicle. Its subcellular location is the clathrin-coated vesicle. The protein resides in the recycling endosome. Functionally, may play a role in vesicle-mediated protein trafficking to lysosomal compartments and in membrane docking/fusion reactions of late endosomes/lysosomes. Required for proper trafficking and targeting of the collagen-modifying enzyme lysyl hydroxylase 3 (LH3) to intracellular collagen. Mediates phagolysosomal fusion in macrophages. Proposed to be involved in endosomal maturation implicating in part VIPAS39. In epithelial cells, the VPS33B:VIPAS39 complex may play a role in the apical RAB11A-dependentrecycling pathway and in the maintenance of the apical-basolateral polarity. Seems to be involved in the sorting of specific cargos from the trans-Golgi network to alpha-granule-destined multivesicular bodies (MVBs) promoting MVBs maturation in megakaryocytes. This chain is Vacuolar protein sorting-associated protein 33B (Vps33b), found in Mus musculus (Mouse).